Here is a 299-residue protein sequence, read N- to C-terminus: UTP--glucose-1-phosphate uridylyltransferase (299 aa).

It belongs to the UDPGP type 2 family.

It catalyses the reaction alpha-D-glucose 1-phosphate + UTP + H(+) = UDP-alpha-D-glucose + diphosphate. It participates in carbohydrate metabolism; nucleotide-sugar metabolism. Its pathway is capsule biogenesis; capsule polysaccharide biosynthesis. The chain is UTP--glucose-1-phosphate uridylyltransferase (cap4C) from Streptococcus pneumoniae serotype 4 (strain ATCC BAA-334 / TIGR4).